A 142-amino-acid chain; its full sequence is Natriuretic peptides A (142 aa).

Residues 1-23 (MMLKTVIYTGVLFLICNKVLVRA) form the signal peptide. Residues 24–112 (DPLYSPYSSK…RLRDLLMAPR (89 aa)) constitute a propeptide that is removed on maturation. The tract at residues 47–123 (DTLGQDEGND…NRGSSGCFGS (77 aa)) is disordered. Positions 77-94 (WDRERERQWPASDYKKPQ) are enriched in basic and acidic residues. An intrachain disulfide couples Cys120 to Cys136.

It belongs to the natriuretic peptide family. Cleaved upon secretion to produce the functional hormone. As to expression, expressed in heart atrium and to a lower extent in heart ventricle, but not in brain.

The protein resides in the secreted. In terms of biological role, hormone playing a key role in cardiovascular homeostasis through regulation of natriuresis, diuresis, and vasodilation. Has a cGMP-stimulating activity. The protein is Natriuretic peptides A (nppa) of Acipenser transmontanus (White sturgeon).